The following is a 359-amino-acid chain: 4-galactosyl-N-acetylglucosaminide 3-alpha-L-fucosyltransferase 9 (359 aa).

Residues 1-11 (MTSASKGILRP) are Cytoplasmic-facing. Residues 12 to 32 (FLIVCIILGCFMACLLIYIKP) traverse the membrane as a helical; Signal-anchor for type II membrane protein segment. Topologically, residues 33 to 359 (TNSWIFSPME…VGNLEKWFWN (327 aa)) are lumenal. Asparagine 62 carries an N-linked (GlcNAc...) asparagine glycan. The segment at 63–168 (ETTILIWVWP…RRDSDIQVPY (106 aa)) is acceptor-binding. Residue glutamine 75 participates in a beta-D-galactosyl-(1-&gt;4)-N-acetyl-beta-D-glucosaminyl derivative binding. 3 disulfides stabilise this stretch: cysteine 82–cysteine 335, cysteine 91–cysteine 338, and cysteine 190–cysteine 238. Asparagine 101 is a glycosylation site (N-linked (GlcNAc...) asparagine). A beta-D-galactosyl-(1-&gt;4)-N-acetyl-beta-D-glucosaminyl derivative is bound at residue glutamate 137. Glutamate 137 serves as the catalytic Nucleophile. GDP-beta-L-fucose is bound at residue glutamate 137. An N-linked (GlcNAc...) asparagine glycan is attached at asparagine 153. GDP-beta-L-fucose contacts are provided by tyrosine 168, valine 192, serine 194, asparagine 195, arginine 202, valine 226, tyrosine 241, asparagine 246, tyrosine 252, glutamate 255, and lysine 256. Residues 169–326 (GFLTVSTNPF…NWRKDFTVNL (158 aa)) form a donor-binding region. The interval 327 to 359 (PRFWESHACLACDHVKRHQEYKSVGNLEKWFWN) is acceptor-binding.

The protein belongs to the glycosyltransferase 10 family. Homodimer. N-glycosylated with complex-type N-glycans.

It is found in the golgi apparatus. Its subcellular location is the trans-Golgi network membrane. The protein localises to the golgi apparatus membrane. It carries out the reaction a beta-D-galactosyl-(1-&gt;4)-N-acetyl-beta-D-glucosaminyl derivative + GDP-beta-L-fucose = a beta-D-galactosyl-(1-&gt;4)-[alpha-L-fucosyl-(1-&gt;3)]-N-acetyl-beta-D-glucosaminyl derivative + GDP + H(+). It catalyses the reaction an alpha-Neu5Ac-(2-&gt;3)-beta-D-Gal-(1-&gt;4)-beta-D-GlcNAc-(1-&gt;3)-beta-D-Gal-(1-&gt;4)-beta-D-GlcNAc derivative + GDP-beta-L-fucose = an alpha-Neu5Ac-(2-&gt;3)-beta-D-Gal-(1-&gt;4)-beta-D-GlcNAc-(1-&gt;3)-beta-D-Gal-(1-&gt;4)-[alpha-L-Fuc-(1-&gt;3)]-beta-D-GlcNAc derivative + GDP + H(+). The catalysed reaction is alpha-N-glycoloylneuraminosyl-(2-&gt;3)-beta-D-galactosyl-(1-&gt;4)-N-acetyl-beta-D-glucosaminyl-(1-&gt;3)-beta-D-galactosyl-(1-&gt;4)-N-acetyl-beta-D-glucosaminyl-(1-&gt;3)-beta-D-galactosyl-(1-&gt;4)-beta-D-glucosyl-(1&lt;-&gt;1')-ceramide + GDP-beta-L-fucose = alpha-N-glycoloylneuraminosyl-(2-&gt;3)-beta-D-galactosyl-(1-&gt;4)-N-acetyl-beta-D-glucosaminyl-(1-&gt;3)-beta-D-galactosyl-(1-&gt;4)-[alpha-L-fucosyl-(1-&gt;3)]-N-acetyl-beta-D-glucosaminyl-(1-&gt;3)-beta-D-galactosyl-(1-&gt;4)-beta-D-glucosyl-(1&lt;-&gt;1')-ceramide + GDP + H(+). The enzyme catalyses alpha-D-galactosyl-(1-&gt;3)-beta-D-galactosyl-(1-&gt;4)-N-acetyl-beta-D-glucosaminyl-(1-&gt;3)-beta-D-galactosyl-(1-&gt;4)-beta-D-glucosyl-(1&lt;-&gt;1')-ceramide + GDP-beta-L-fucose = a neolactoside IV(3)-alpha-Gal,III(3)-alpha-Fuc-nLc4Cer + GDP + H(+). It carries out the reaction a neolactoside nLc4Cer + GDP-beta-L-fucose = a neolactoside III(3)-alpha-Fuc-nLc4Cer + GDP + H(+). It catalyses the reaction an N-acetyl-alpha-neuraminyl-(2-&gt;3)-beta-D-galactosyl-(1-&gt;4)-N-acetyl-beta-D-glucosaminyl derivative + GDP-beta-L-fucose = an alpha-Neu5Ac-(2-&gt;3)-beta-D-Gal-(1-&gt;4)-[alpha-L-Fuc-(1-&gt;3)]-beta-D-GlcNAc derivative + GDP + H(+). The catalysed reaction is beta-D-Gal-(1-&gt;4)-beta-D-GlcNAc-(1-&gt;3)-beta-D-Gal-(1-&gt;4)-D-Glc + GDP-beta-L-fucose = beta-D-Gal-(1-&gt;4)-[alpha-L-Fuc-(1-&gt;3)]-beta-D-GlcNAc-(1-&gt;3)-beta-D-Gal-(1-&gt;4)-D-Glc + GDP + H(+). The enzyme catalyses an alpha-L-Fuc-(1-&gt;2)-beta-D-Gal-(1-&gt;4)-beta-D-GlcNAc derivative + GDP-beta-L-fucose = an alpha-L-Fuc-(1-&gt;2)-beta-D-Gal-(1-&gt;4)-[alpha-L-Fuc-(1-&gt;3)]-beta-D-GlcNAc derivative + GDP + H(+). It functions in the pathway protein modification; protein glycosylation. It participates in glycolipid biosynthesis. Its activity is regulated as follows. Activated by Mn2+. Functionally, catalyzes alpha(1-&gt;3) linkage of fucosyl moiety transferred from GDP-beta-L-fucose to N-acetyl glucosamine (GlcNAc) within type 2 lactosamine (LacNAc, beta-D-Gal-(1-&gt;4)-beta-D-GlcNAc-) glycan attached to glycolipids and N- or O-linked glycoproteins. Fucosylates distal type 2 LacNAc and its fucosylated (H-type 2 LacNAc) and sialylated (sialyl-type 2 LacNAc) derivatives to form Lewis x (Lex) (CD15) and Lewis y (Ley) antigenic epitopes involved in cell adhesion and differentiation. Generates Lex epitopes in the brain, presumably playing a role in the maintenance of neuronal stemness and neurite outgrowth in progenitor neural cells. Fucosylates the internal type 2 LacNAc unit of the polylactosamine chain to form VIM-2 antigen that serves as recognition epitope for SELE. Can also modify milk oligosaccharides in particular type 2 tetrasaccharide LNnT. This is 4-galactosyl-N-acetylglucosaminide 3-alpha-L-fucosyltransferase 9 from Canis lupus familiaris (Dog).